The primary structure comprises 481 residues: Proline--tRNA ligase (481 aa).

This sequence belongs to the class-II aminoacyl-tRNA synthetase family. ProS type 3 subfamily. As to quaternary structure, homodimer.

It localises to the cytoplasm. The enzyme catalyses tRNA(Pro) + L-proline + ATP = L-prolyl-tRNA(Pro) + AMP + diphosphate. In terms of biological role, catalyzes the attachment of proline to tRNA(Pro) in a two-step reaction: proline is first activated by ATP to form Pro-AMP and then transferred to the acceptor end of tRNA(Pro). The chain is Proline--tRNA ligase from Saccharolobus islandicus (strain Y.N.15.51 / Yellowstone #2) (Sulfolobus islandicus).